A 253-amino-acid chain; its full sequence is Tryptophan synthase alpha chain (253 aa).

Active-site proton acceptor residues include E47 and D58.

The protein belongs to the TrpA family. Tetramer of two alpha and two beta chains.

It carries out the reaction (1S,2R)-1-C-(indol-3-yl)glycerol 3-phosphate + L-serine = D-glyceraldehyde 3-phosphate + L-tryptophan + H2O. It participates in amino-acid biosynthesis; L-tryptophan biosynthesis; L-tryptophan from chorismate: step 5/5. Functionally, the alpha subunit is responsible for the aldol cleavage of indoleglycerol phosphate to indole and glyceraldehyde 3-phosphate. This is Tryptophan synthase alpha chain from Lactococcus lactis subsp. lactis (strain IL1403) (Streptococcus lactis).